A 318-amino-acid polypeptide reads, in one-letter code: Probable dual-specificity RNA methyltransferase RlmN (318 aa).

The active-site Proton acceptor is the Glu63. The region spanning 69-299 (HDYGRTVCVS…VSLRRELGAD (231 aa)) is the Radical SAM core domain. A disulfide bond links Cys76 and Cys304. Residues Cys83, Cys87, and Cys90 each coordinate [4Fe-4S] cluster. S-adenosyl-L-methionine is bound by residues 130–131 (GE), Ser162, 185–187 (SLH), and Asn261. Cys304 acts as the S-methylcysteine intermediate in catalysis.

The protein belongs to the radical SAM superfamily. RlmN family. The cofactor is [4Fe-4S] cluster.

It localises to the cytoplasm. It carries out the reaction adenosine(2503) in 23S rRNA + 2 reduced [2Fe-2S]-[ferredoxin] + 2 S-adenosyl-L-methionine = 2-methyladenosine(2503) in 23S rRNA + 5'-deoxyadenosine + L-methionine + 2 oxidized [2Fe-2S]-[ferredoxin] + S-adenosyl-L-homocysteine. The enzyme catalyses adenosine(37) in tRNA + 2 reduced [2Fe-2S]-[ferredoxin] + 2 S-adenosyl-L-methionine = 2-methyladenosine(37) in tRNA + 5'-deoxyadenosine + L-methionine + 2 oxidized [2Fe-2S]-[ferredoxin] + S-adenosyl-L-homocysteine. Specifically methylates position 2 of adenine 2503 in 23S rRNA and position 2 of adenine 37 in tRNAs. In Desulforudis audaxviator (strain MP104C), this protein is Probable dual-specificity RNA methyltransferase RlmN.